Here is a 1050-residue protein sequence, read N- to C-terminus: MDS1 and EVI1 complex locus protein EVI1-B (1050 aa).

3 consecutive C2H2-type zinc fingers follow at residues Tyr21–His48, His75–His97, and Tyr103–His125. The C2H2-type 4; degenerate zinc finger occupies Tyr131 to His155. 2 consecutive C2H2-type zinc fingers follow at residues His161–His183 and Phe189–His211. Residues Ile218 to Cys240 form a C2H2-type 7; atypical zinc finger. 2 disordered regions span residues Ile371–Asp421 and Pro529–Asp612. Over residues Arg379–Ser390 the composition is skewed to basic and acidic residues. The segment covering Ser397–Asp411 has biased composition (polar residues). The Nuclear localization signal signature appears at Lys420 to Lys433. Residues Pro529 to Lys542 show a composition bias toward basic and acidic residues. The CTBP-binding motif 1 motif lies at Ala551–Thr555. Over residues Ser564 to Ser576 the composition is skewed to low complexity. The CTBP-binding motif 2 signature appears at Pro582–Ser586. The span at Gly588–Gln598 shows a compositional bias: polar residues. The segment covering Thr599–Asp612 has biased composition (basic and acidic residues). 3 C2H2-type zinc fingers span residues Tyr731–His753, Tyr759–His782, and Phe788–His810. Residues Lys928–Phe951 are disordered.

Homooligomer. Interacts with ctbp.

The protein resides in the nucleus. Its subcellular location is the nucleus speckle. Its function is as follows. Transcriptional repressor during pronephros development. Plays a role in regionalization of the pronephros; may promote formation of the distal tubule and duct over formation of the glomus and proximal tubule. The chain is MDS1 and EVI1 complex locus protein EVI1-B (mecom-b) from Xenopus laevis (African clawed frog).